A 363-amino-acid chain; its full sequence is Protein RecA (363 aa).

77–84 lines the ATP pocket; that stretch reads GPESSGKT.

It belongs to the RecA family.

It localises to the cytoplasm. Functionally, can catalyze the hydrolysis of ATP in the presence of single-stranded DNA, the ATP-dependent uptake of single-stranded DNA by duplex DNA, and the ATP-dependent hybridization of homologous single-stranded DNAs. It interacts with LexA causing its activation and leading to its autocatalytic cleavage. In Agrobacterium fabrum (strain C58 / ATCC 33970) (Agrobacterium tumefaciens (strain C58)), this protein is Protein RecA.